Consider the following 510-residue polypeptide: NAD(P)H-quinone oxidoreductase subunit 2, chloroplastic (510 aa).

The next 12 membrane-spanning stretches (helical) occupy residues 24 to 44, 59 to 79, 99 to 119, 124 to 144, 149 to 169, 183 to 203, 229 to 249, 295 to 315, 323 to 343, 347 to 367, 395 to 415, and 418 to 438; these read LLLFHGSFIFPECILIFGLIL, WFYFISSTSLVMSITALLFRW, IFQFLILLCSTLCIPLSVEYI, MAITEFLLFVLTATLGGMFLC, LITIFVAPECFSLCSYLLSGY, YLLMGGASSSILVHGFSWLYG, ISIALISITVGIGFKLSPAPF, WHLLLEILAILSMILGNLIAI, MLAYSSIGQIGYVIIGIIVGD, GYASMITYMLFYISMNLGTFA, ALSSALCLLSLGGLPPLAGFF, and LHLFWCGWQAGLYFLVSIGLL.

It belongs to the complex I subunit 2 family. As to quaternary structure, NDH is composed of at least 16 different subunits, 5 of which are encoded in the nucleus.

The protein localises to the plastid. It localises to the chloroplast thylakoid membrane. It carries out the reaction a plastoquinone + NADH + (n+1) H(+)(in) = a plastoquinol + NAD(+) + n H(+)(out). The catalysed reaction is a plastoquinone + NADPH + (n+1) H(+)(in) = a plastoquinol + NADP(+) + n H(+)(out). In terms of biological role, NDH shuttles electrons from NAD(P)H:plastoquinone, via FMN and iron-sulfur (Fe-S) centers, to quinones in the photosynthetic chain and possibly in a chloroplast respiratory chain. The immediate electron acceptor for the enzyme in this species is believed to be plastoquinone. Couples the redox reaction to proton translocation, and thus conserves the redox energy in a proton gradient. This Yucca glauca (Soapweed yucca) protein is NAD(P)H-quinone oxidoreductase subunit 2, chloroplastic.